A 178-amino-acid chain; its full sequence is MSGGKYVDSEGHLYTVPIREQGNIYKPNNKAMAEEINEKQVYDAHTKEIDLVNRDPKHLNDDVVKIDFEDVIAEPEGTHSFDGIWKASFTTFTVTKYWFYRLLSALFGIPMALIWGIYFAILSFLHIWAVVPCIKSFLIEIQCISRVYSIYVHTFCDPFFEAVGKIFSNIRINMQKEI.

Ser-2 is subject to N-acetylserine. The residue at position 2 (Ser-2) is a Phosphoserine. The tract at residues 2–94 (SGGKYVDSEG…WKASFTTFTV (93 aa)) is required for homooligomerization. The Cytoplasmic portion of the chain corresponds to 2 to 104 (SGGKYVDSEG…TKYWFYRLLS (103 aa)). Position 5 is an N6-acetyllysine; alternate (Lys-5). Lys-5 is covalently cross-linked (Glycyl lysine isopeptide (Lys-Gly) (interchain with G-Cter in ubiquitin); alternate). The residue at position 6 (Tyr-6) is a Phosphotyrosine. Ser-9 carries the post-translational modification Phosphoserine. Position 14 is a phosphotyrosine; by ABL1 (Tyr-14). Tyr-25 carries the post-translational modification Phosphotyrosine. Residues Lys-26, Lys-30, Lys-39, Lys-47, and Lys-57 each participate in a glycyl lysine isopeptide (Lys-Gly) (interchain with G-Cter in ubiquitin) cross-link. The tract at residues 82-94 (DGIWKASFTTFTV) is interaction with CAVIN3. The segment at residues 105-125 (ALFGIPMALIWGIYFAILSFL) is an intramembrane region (helical). Over 126–178 (HIWAVVPCIKSFLIEIQCISRVYSIYVHTFCDPFFEAVGKIFSNIRINMQKEI) the chain is Cytoplasmic. An interacts with SPRY1, SPRY2, SPRY3 and SPRY4 region spans residues 131 to 142 (VPCIKSFLIEIQ). S-palmitoyl cysteine attachment occurs at residues Cys-133, Cys-143, and Cys-156. An interacts with SPRY1, SPRY2, and SPRY4 region spans residues 149 to 160 (SIYVHTFCDPFF). Positions 167 to 178 (FSNIRINMQKEI) are interacts with SPRY1, SPRY2, SPRY3 and SPRY4.

It belongs to the caveolin family. As to quaternary structure, homooligomer. Interacts with GLIPR2. Interacts with NOSTRIN. Interacts with SNAP25 and STX1A. Interacts (via the N-terminus) with DPP4; the interaction is direct. Interacts with CTNNB1, CDH1 and JUP. Interacts with PACSIN2; this interaction induces membrane tubulation. Interacts with SLC7A9. Interacts with BMX and BTK. Interacts with TGFBR1. Interacts with CAVIN3 (via leucine-zipper domain) in a cholesterol-sensitive manner. Interacts with CAVIN1. Interacts with EHD2 in a cholesterol-dependent manner. Forms a ternary complex with UBXN6 and VCP; mediates CAV1 targeting to lysosomes for degradation. Interacts with ABCG1; this interaction regulates ABCG1-mediated cholesterol efflux. Interacts with NEU3; this interaction enhances NEU3 sialidase activity within caveola. Interacts (via C-terminus) with SPRY1, SPRY2 (via C-terminus), SPRY3, and SPRY4. Interacts with IGFBP5; this interaction allows trafficking of IGFBP5 from the plasma membrane to the nucleus. Post-translationally, phosphorylated at Tyr-14 by ABL1 in response to oxidative stress. Ubiquitinated. Undergo monoubiquitination and multi- and/or polyubiquitination. Monoubiquitination of N-terminal lysines promotes integration in a ternary complex with UBXN6 and VCP which promotes oligomeric CAV1 targeting to lysosomes for degradation. Ubiquitinated by ZNRF1; leading to degradation and modulation of the TLR4-mediated immune response.

It localises to the golgi apparatus membrane. It is found in the cell membrane. Its subcellular location is the membrane. The protein resides in the caveola. The protein localises to the membrane raft. Functionally, may act as a scaffolding protein within caveolar membranes. Forms a stable heterooligomeric complex with CAV2 that targets to lipid rafts and drives caveolae formation. Mediates the recruitment of CAVIN proteins (CAVIN1/2/3/4) to the caveolae. Interacts directly with G-protein alpha subunits and can functionally regulate their activity. Involved in the costimulatory signal essential for T-cell receptor (TCR)-mediated T-cell activation. Its binding to DPP4 induces T-cell proliferation and NF-kappa-B activation in a T-cell receptor/CD3-dependent manner. Recruits CTNNB1 to caveolar membranes and may regulate CTNNB1-mediated signaling through the Wnt pathway. Negatively regulates TGFB1-mediated activation of SMAD2/3 by mediating the internalization of TGFBR1 from membrane rafts leading to its subsequent degradation. Binds 20(S)-hydroxycholesterol (20(S)-OHC). This is Caveolin-1 (CAV1) from Felis catus (Cat).